We begin with the raw amino-acid sequence, 116 residues long: Large ribosomal subunit protein bL19 (116 aa).

The protein belongs to the bacterial ribosomal protein bL19 family.

In terms of biological role, this protein is located at the 30S-50S ribosomal subunit interface and may play a role in the structure and function of the aminoacyl-tRNA binding site. This Pseudomonas fluorescens (strain Pf0-1) protein is Large ribosomal subunit protein bL19.